A 142-amino-acid chain; its full sequence is Sec-independent protein translocase protein TatB (142 aa).

The chain crosses the membrane as a helical span at residues 1–21 (MFDFGFSELVVIGVVMLIVVG). The tract at residues 99–142 (AAPPDNTTSAESQAAADPAAVDSSQQLELRLDTTPKQVVGSDKA) is disordered. Residues 107–124 (SAESQAAADPAAVDSSQQ) are compositionally biased toward low complexity.

The protein belongs to the TatB family. The Tat system comprises two distinct complexes: a TatABC complex, containing multiple copies of TatA, TatB and TatC subunits, and a separate TatA complex, containing only TatA subunits. Substrates initially bind to the TatABC complex, which probably triggers association of the separate TatA complex to form the active translocon.

Its subcellular location is the cell inner membrane. Part of the twin-arginine translocation (Tat) system that transports large folded proteins containing a characteristic twin-arginine motif in their signal peptide across membranes. Together with TatC, TatB is part of a receptor directly interacting with Tat signal peptides. TatB may form an oligomeric binding site that transiently accommodates folded Tat precursor proteins before their translocation. This is Sec-independent protein translocase protein TatB from Azoarcus sp. (strain BH72).